Consider the following 459-residue polypeptide: Elongation factor 1-alpha (459 aa).

N,N,N-trimethylglycine is present on glycine 2. Lysine 3 is modified (N6,N6-dimethyllysine; alternate). An N6-methyllysine; alternate modification is found at lysine 3. The 236-residue stretch at 5–240 (KLHVNVVVIG…DAIEPPTRPT (236 aa)) folds into the tr-type G domain. Residues 14-21 (GHVDSGKS) form a G1 region. 14 to 21 (GHVDSGKS) provides a ligand contact to GTP. The residue at position 30 (lysine 30) is an N6-methyllysine. The interval 70–74 (GITID) is G2. Lysine 79 carries the N6,N6,N6-trimethyllysine modification. The tract at residues 91-94 (DAPG) is G3. GTP-binding positions include 91 to 95 (DAPGH) and 153 to 156 (NKMD). Residues 153–156 (NKMD) are G4. Residues 192–194 (SGW) are G5. N6,N6-dimethyllysine; alternate is present on lysine 316. The residue at position 316 (lysine 316) is an N6-methyllysine; alternate. An N6-methyllysine modification is found at lysine 390.

This sequence belongs to the TRAFAC class translation factor GTPase superfamily. Classic translation factor GTPase family. EF-Tu/EF-1A subfamily.

Its subcellular location is the cytoplasm. This protein promotes the GTP-dependent binding of aminoacyl-tRNA to the A-site of ribosomes during protein biosynthesis. In Cryptococcus neoformans var. neoformans serotype D (strain B-3501A) (Filobasidiella neoformans), this protein is Elongation factor 1-alpha (TEF1).